Reading from the N-terminus, the 157-residue chain is Small ribosomal subunit protein uS7 (157 aa).

This sequence belongs to the universal ribosomal protein uS7 family. Part of the 30S ribosomal subunit. Contacts proteins S9 and S11.

Functionally, one of the primary rRNA binding proteins, it binds directly to 16S rRNA where it nucleates assembly of the head domain of the 30S subunit. Is located at the subunit interface close to the decoding center, probably blocks exit of the E-site tRNA. This is Small ribosomal subunit protein uS7 from Opitutus terrae (strain DSM 11246 / JCM 15787 / PB90-1).